We begin with the raw amino-acid sequence, 120 residues long: Small ribosomal subunit protein uS11 (120 aa).

The protein belongs to the universal ribosomal protein uS11 family. Part of the 30S ribosomal subunit. Interacts with proteins S7 and S18. Binds to IF-3.

In terms of biological role, located on the platform of the 30S subunit, it bridges several disparate RNA helices of the 16S rRNA. Forms part of the Shine-Dalgarno cleft in the 70S ribosome. The sequence is that of Small ribosomal subunit protein uS11 from Neorickettsia sennetsu (strain ATCC VR-367 / Miyayama) (Ehrlichia sennetsu).